Reading from the N-terminus, the 284-residue chain is 4-hydroxybenzoate octaprenyltransferase (284 aa).

7 helical membrane passes run 13–32 (FNRPIGSFLLMWPTLWALWL), 90–110 (ALMLFCALSILSFILVLFTDL), 112–132 (TILLSFVGLGLAALYPFMKRY), 134–154 (HLPQLFLGLAFSWAIPMAYSA), 164–184 (LWMLFVANCFWTIAYDTYYAM), 200–220 (ILFGQYDLFVIICLQGLTLSL), and 224–244 (IGLLAGLHWLYFVSLIVCVGL).

The protein belongs to the UbiA prenyltransferase family. Mg(2+) serves as cofactor.

The protein resides in the cell inner membrane. It carries out the reaction all-trans-octaprenyl diphosphate + 4-hydroxybenzoate = 4-hydroxy-3-(all-trans-octaprenyl)benzoate + diphosphate. Its pathway is cofactor biosynthesis; ubiquinone biosynthesis. In terms of biological role, catalyzes the prenylation of para-hydroxybenzoate (PHB) with an all-trans polyprenyl group. Mediates the second step in the final reaction sequence of ubiquinone-8 (UQ-8) biosynthesis, which is the condensation of the polyisoprenoid side chain with PHB, generating the first membrane-bound Q intermediate 3-octaprenyl-4-hydroxybenzoate. The sequence is that of 4-hydroxybenzoate octaprenyltransferase from Marinomonas sp. (strain MWYL1).